We begin with the raw amino-acid sequence, 683 residues long: ATP-dependent zinc metalloprotease FtsH (683 aa).

The interval 1-43 (MEDKNIKDDEILDDQNDNQEDVQNQDEEKEIKPKKPKKKVYIS) is disordered. Over 1–70 (MEDKNIKDDE…KNNNISFRVK (70 aa)) the chain is Cytoplasmic. The segment covering 10–28 (EILDDQNDNQEDVQNQDEE) has biased composition (acidic residues). The chain crosses the membrane as a helical span at residues 71–91 (PPIFFFLILILMSTLFYFYGN). At 92–174 (KTALFQEKRE…IVVLGTPVSS (83 aa)) the chain is on the periplasmic side. A helical transmembrane segment spans residues 175–195 (IITRAIFSFAPLFMLLFFFYF). Residues 196–683 (INKKMMGSSG…LDDEQLEKYY (488 aa)) are Cytoplasmic-facing. 270–277 (GEPGTGKT) is an ATP binding site. H494 serves as a coordination point for Zn(2+). The active site involves E495. Zn(2+) contacts are provided by H498 and D569.

It in the central section; belongs to the AAA ATPase family. In the C-terminal section; belongs to the peptidase M41 family. Homohexamer. It depends on Zn(2+) as a cofactor.

It localises to the cell inner membrane. Functionally, acts as a processive, ATP-dependent zinc metallopeptidase for both cytoplasmic and membrane proteins. Plays a role in the quality control of integral membrane proteins. This chain is ATP-dependent zinc metalloprotease FtsH, found in Streptobacillus moniliformis (strain ATCC 14647 / DSM 12112 / NCTC 10651 / 9901).